A 70-amino-acid polypeptide reads, in one-letter code: Consomatin Mrc3 (70 aa).

An N-terminal signal peptide occupies residues M1–G22. A propeptide spanning residues G23–R55 is cleaved from the precursor. A disulfide bridge connects residues C62 and C67. Position 64 is a D-tryptophan (W64). Position 68 is a 4-hydroxyproline (P68). Residue Y69 is modified to Tyrosine amide.

This sequence belongs to the conotoxin C superfamily. Consomatin family. As to expression, expressed by the venom duct.

It is found in the secreted. In terms of biological role, moderately activates human somatostatin receptors (SSTR) with a preferential activation of SSTR1 and SSTR4. In vivo, does not cause behavioral changes in mice within a few minutes of intracranial injection, but causes a progressive loss of movement thereafter. Four to five hours after injection, mice recover, even with the highest dose tested. Shows antinociception and antihyperalgesia activities in two mouse models of acute pain, most probably by acting outside the central nervous system. This chain is Consomatin Mrc3, found in Conus mercator (Trader cone).